Reading from the N-terminus, the 186-residue chain is Orotate phosphoribosyltransferase (186 aa).

5-phospho-alpha-D-ribose 1-diphosphate-binding positions include Arg93, Lys94, Lys97, His99, and 119–127 (EDVTTTGGS). Orotate contacts are provided by Thr123 and Arg151.

It belongs to the purine/pyrimidine phosphoribosyltransferase family. PyrE subfamily. In terms of assembly, homodimer. Mg(2+) is required as a cofactor.

The enzyme catalyses orotidine 5'-phosphate + diphosphate = orotate + 5-phospho-alpha-D-ribose 1-diphosphate. It functions in the pathway pyrimidine metabolism; UMP biosynthesis via de novo pathway; UMP from orotate: step 1/2. Functionally, catalyzes the transfer of a ribosyl phosphate group from 5-phosphoribose 1-diphosphate to orotate, leading to the formation of orotidine monophosphate (OMP). This is Orotate phosphoribosyltransferase from Pyrococcus horikoshii (strain ATCC 700860 / DSM 12428 / JCM 9974 / NBRC 100139 / OT-3).